Reading from the N-terminus, the 152-residue chain is Large ribosomal subunit protein bL9 (152 aa).

This sequence belongs to the bacterial ribosomal protein bL9 family.

Binds to the 23S rRNA. The sequence is that of Large ribosomal subunit protein bL9 from Mycobacterium marinum (strain ATCC BAA-535 / M).